Here is a 222-residue protein sequence, read N- to C-terminus: Iron-sulfur cluster repair protein YtfE (222 aa).

This sequence belongs to the RIC family. YtfE subfamily. Homodimer.

It localises to the cytoplasm. In terms of biological role, di-iron-containing protein involved in the repair of iron-sulfur clusters damaged by oxidative and nitrosative stress conditions. The sequence is that of Iron-sulfur cluster repair protein YtfE from Musicola paradisiaca (strain Ech703) (Dickeya paradisiaca).